The primary structure comprises 257 residues: 5-keto-4-deoxy-D-glucarate aldolase (257 aa).

Catalysis depends on histidine 51, which acts as the Proton acceptor. Glutamine 152 is a substrate binding site. Glutamate 154 lines the Mg(2+) pocket. Serine 179 and aspartate 180 together coordinate substrate. Aspartate 180 lines the Mg(2+) pocket.

It belongs to the HpcH/HpaI aldolase family. KDGluc aldolase subfamily. As to quaternary structure, homohexamer; trimer of dimers. Requires Mg(2+) as cofactor.

It catalyses the reaction 5-dehydro-4-deoxy-D-glucarate = 2-hydroxy-3-oxopropanoate + pyruvate. The enzyme catalyses 2-dehydro-3-deoxy-D-glucarate = 2-hydroxy-3-oxopropanoate + pyruvate. It functions in the pathway carbohydrate acid metabolism; galactarate degradation; D-glycerate from galactarate: step 2/3. In terms of biological role, catalyzes the reversible retro-aldol cleavage of both 5-keto-4-deoxy-D-glucarate and 2-keto-3-deoxy-D-glucarate to pyruvate and tartronic semialdehyde. This Shigella boydii serotype 18 (strain CDC 3083-94 / BS512) protein is 5-keto-4-deoxy-D-glucarate aldolase.